The following is a 525-amino-acid chain: GMP synthase [glutamine-hydrolyzing] (525 aa).

The Glutamine amidotransferase type-1 domain occupies Arg-9–Leu-207. Cys-86 (nucleophile) is an active-site residue. Residues His-181 and Glu-183 contribute to the active site. One can recognise a GMPS ATP-PPase domain in the interval Trp-208–Arg-400. Residue Ser-235 to Ser-241 participates in ATP binding.

In terms of assembly, homodimer.

The catalysed reaction is XMP + L-glutamine + ATP + H2O = GMP + L-glutamate + AMP + diphosphate + 2 H(+). It functions in the pathway purine metabolism; GMP biosynthesis; GMP from XMP (L-Gln route): step 1/1. In terms of biological role, catalyzes the synthesis of GMP from XMP. This Escherichia coli (strain K12 / MC4100 / BW2952) protein is GMP synthase [glutamine-hydrolyzing].